An 88-amino-acid polypeptide reads, in one-letter code: Putative carnobacteriocin-BM1 immunity protein (88 aa).

Could impart immunity to carnobacteriocin-BM1 to naturally sensitive host strains. The chain is Putative carnobacteriocin-BM1 immunity protein from Carnobacterium maltaromaticum (Carnobacterium piscicola).